The sequence spans 176 residues: Disulfide bond formation protein B (176 aa).

The Cytoplasmic segment spans residues Met-1 to Ala-14. A helical transmembrane segment spans residues Trp-15–Trp-31. Residues Phe-32–Cys-49 lie on the Periplasmic side of the membrane. Cys-41 and Cys-44 form a disulfide bridge. Residues Ala-50–Pro-65 traverse the membrane as a helical segment. Residues Lys-66 to Tyr-71 are Cytoplasmic-facing. A helical membrane pass occupies residues Val-72–Tyr-89. Residues Glu-90–Gln-144 are Periplasmic-facing. An intrachain disulfide couples Cys-104 to Cys-130. Residues Trp-145 to Ser-163 form a helical membrane-spanning segment. At Gln-164 to Arg-176 the chain is on the cytoplasmic side.

Belongs to the DsbB family.

Its subcellular location is the cell inner membrane. Functionally, required for disulfide bond formation in some periplasmic proteins. Acts by oxidizing the DsbA protein. The protein is Disulfide bond formation protein B of Escherichia coli O1:K1 / APEC.